The primary structure comprises 264 residues: Major prion protein (264 aa).

Positions 1–24 are cleaved as a signal peptide; that stretch reads MVKRHIGSWILVLFVVMWSDVGLC. The tract at residues 25–241 is interaction with GRB2, ERI3 and SYN1; the sequence is KKRPKPGGGW…ESQAYYQRGA (217 aa). Residues 27–119 are disordered; the sequence is RPKPGGGWNT…WNKPSKPKTN (93 aa). Tandem repeats lie at residues 54-62, 63-70, 71-78, 79-86, 87-94, and 95-103. Residues 54–103 form a 6 X 8 AA tandem repeats of P-H-G-G-G-W-G-Q region; sequence SQGGGGWGQPHGGGWGQPHGGGWGQPHGGGWGQPHGGGWGQPHGGGGWGQ. Positions 55 to 105 are enriched in gly residues; that stretch reads QGGGGWGQPHGGGWGQPHGGGWGQPHGGGWGQPHGGGWGQPHGGGGWGQGG. Cu(2+) contacts are provided by His-72, Gly-73, Gly-74, His-80, Gly-81, Gly-82, His-88, Gly-89, Gly-90, His-96, Gly-98, and Gly-99. An intrachain disulfide couples Cys-190 to Cys-225. 2 N-linked (GlcNAc...) asparagine glycosylation sites follow: Asn-192 and Asn-208. The GPI-anchor amidated alanine moiety is linked to residue Ala-241. The propeptide at 242-264 is removed in mature form; sequence SVILFSSPPVILLISLLIFLIVG.

It belongs to the prion family. As to quaternary structure, monomer and homodimer. Has a tendency to aggregate into amyloid fibrils containing a cross-beta spine, formed by a steric zipper of superposed beta-strands. Soluble oligomers may represent an intermediate stage on the path to fibril formation. Copper binding may promote oligomerization. Interacts with GRB2, APP, ERI3/PRNPIP and SYN1. Mislocalized cytosolically exposed PrP interacts with MGRN1; this interaction alters MGRN1 subcellular location and causes lysosomal enlargement. Interacts with KIAA1191.

The protein localises to the cell membrane. It is found in the golgi apparatus. Its primary physiological function is unclear. Has cytoprotective activity against internal or environmental stresses. May play a role in neuronal development and synaptic plasticity. May be required for neuronal myelin sheath maintenance. May play a role in iron uptake and iron homeostasis. Soluble oligomers are toxic to cultured neuroblastoma cells and induce apoptosis (in vitro). Association with GPC1 (via its heparan sulfate chains) targets PRNP to lipid rafts. Also provides Cu(2+) or Zn(2+) for the ascorbate-mediated GPC1 deaminase degradation of its heparan sulfate side chains. The polypeptide is Major prion protein (PRNP) (Bubalus bubalis (Domestic water buffalo)).